Consider the following 542-residue polypeptide: Prolyl 3-hydroxylase OGFOD1 (542 aa).

Residues 134–239 (DLESTIDMSC…RLSISGWFHG (106 aa)) form the Fe2OG dioxygenase domain. Fe cation-binding residues include His-155 and Asp-157. 2-oxoglutarate is bound at residue Tyr-169. His-218 is a binding site for Fe cation. Arg-230 contributes to the 2-oxoglutarate binding site. The tract at residues 371–435 (SEDEPEDKKE…AKKESSVPTC (65 aa)) is disordered. The span at 395–417 (SHSSSEPENSWAATSDSSLQSEG) shows a compositional bias: polar residues.

The protein belongs to the TPA1 family. As to quaternary structure, monomer. The cofactor is Fe(2+). It depends on L-ascorbate as a cofactor.

It is found in the cytoplasm. It localises to the nucleus. The enzyme catalyses [ribosomal protein uS12]-L-proline + 2-oxoglutarate + O2 = [ribosomal protein uS12]-(3S)-3-hydroxy-L-proline + succinate + CO2. Prolyl 3-hydroxylase that catalyzes 3-hydroxylation of 'Pro-62' of small ribosomal subunit uS12 (RPS23), thereby regulating protein translation termination efficiency. Involved in stress granule formation. The chain is Prolyl 3-hydroxylase OGFOD1 (OGFOD1) from Bos taurus (Bovine).